Here is a 107-residue protein sequence, read N- to C-terminus: MVNFNQFLKQAQSMQKKMQEAQEQMANARYTGKAGGGLVEVIATGKGEVEKITIDESLLKPEEKEMLEDLIKVAFNDAKQKCDEDSQNSLSGALNGMSLPPGFKMPF.

This sequence belongs to the YbaB/EbfC family. Homodimer.

It localises to the cytoplasm. It is found in the nucleoid. In terms of biological role, binds to DNA and alters its conformation. May be involved in regulation of gene expression, nucleoid organization and DNA protection. The chain is Nucleoid-associated protein RF_1365 from Rickettsia felis (strain ATCC VR-1525 / URRWXCal2) (Rickettsia azadi).